A 273-amino-acid polypeptide reads, in one-letter code: Protein N-terminal and lysine N-methyltransferase EFM7 (273 aa).

Residues 1–32 form a disordered region; it reads MSDIEDLASGGLFDEPKDFYKPEEQPGSDSYA. A compositionally biased stretch (basic and acidic residues) spans 14–24; that stretch reads DEPKDFYKPEE. S-adenosyl-L-methionine contacts are provided by residues W65, 92–94, D114, W161, and S183; that span reads GAG.

This sequence belongs to the class I-like SAM-binding methyltransferase superfamily. EFM7 family.

The protein resides in the cytoplasm. Its function is as follows. S-adenosyl-L-methionine-dependent protein methyltransferase that trimethylates the N-terminal glycine 'Gly-2' of elongation factor 1-alpha, before also catalyzing the mono- and dimethylation of 'Lys-3'. This is Protein N-terminal and lysine N-methyltransferase EFM7 from Yarrowia lipolytica (strain CLIB 122 / E 150) (Yeast).